The chain runs to 161 residues: 2-C-methyl-D-erythritol 2,4-cyclodiphosphate synthase (161 aa).

Aspartate 9 and histidine 11 together coordinate a divalent metal cation. Residues 9 to 11 (DFH) and 37 to 38 (HS) contribute to the 4-CDP-2-C-methyl-D-erythritol 2-phosphate site. Histidine 45 serves as a coordination point for a divalent metal cation. Residues 59-61 (DIG), 64-68 (FPDTD), 135-138 (TTTE), and arginine 145 contribute to the 4-CDP-2-C-methyl-D-erythritol 2-phosphate site.

This sequence belongs to the IspF family. Homotrimer. It depends on a divalent metal cation as a cofactor.

The catalysed reaction is 4-CDP-2-C-methyl-D-erythritol 2-phosphate = 2-C-methyl-D-erythritol 2,4-cyclic diphosphate + CMP. It functions in the pathway isoprenoid biosynthesis; isopentenyl diphosphate biosynthesis via DXP pathway; isopentenyl diphosphate from 1-deoxy-D-xylulose 5-phosphate: step 4/6. Its function is as follows. Involved in the biosynthesis of isopentenyl diphosphate (IPP) and dimethylallyl diphosphate (DMAPP), two major building blocks of isoprenoid compounds. Catalyzes the conversion of 4-diphosphocytidyl-2-C-methyl-D-erythritol 2-phosphate (CDP-ME2P) to 2-C-methyl-D-erythritol 2,4-cyclodiphosphate (ME-CPP) with a corresponding release of cytidine 5-monophosphate (CMP). This Leptospira borgpetersenii serovar Hardjo-bovis (strain JB197) protein is 2-C-methyl-D-erythritol 2,4-cyclodiphosphate synthase.